The primary structure comprises 611 residues: Actin-related protein 5 (611 aa).

Coiled-coil stretches lie at residues 290 to 329 (TLTS…LDRL) and 355 to 386 (SAEE…NIEV).

It belongs to the actin family. ARP5 subfamily. As to quaternary structure, component of the chromatin remodeling INO80 complex.

The protein resides in the nucleus. Its function is as follows. Proposed core component of the chromatin remodeling INO80 complex which is involved in transcriptional regulation, DNA replication and probably DNA repair. This Gallus gallus (Chicken) protein is Actin-related protein 5 (ACTR5).